The primary structure comprises 246 residues: Ribonuclease 3 (246 aa).

One can recognise an RNase III domain in the interval Ala8–Gly137. Glu50 provides a ligand contact to Mg(2+). Asp54 is a catalytic residue. Asp123 and Glu126 together coordinate Mg(2+). Glu126 is a catalytic residue. Residues Asp164 to Gly233 enclose the DRBM domain. Residues Ser212–Arg246 are disordered.

This sequence belongs to the ribonuclease III family. In terms of assembly, homodimer. It depends on Mg(2+) as a cofactor.

It localises to the cytoplasm. It catalyses the reaction Endonucleolytic cleavage to 5'-phosphomonoester.. Digests double-stranded RNA. Involved in the processing of primary rRNA transcript to yield the immediate precursors to the large and small rRNAs (23S and 16S). Processes some mRNAs, and tRNAs when they are encoded in the rRNA operon. Processes pre-crRNA and tracrRNA of type II CRISPR loci if present in the organism. This Desulforamulus reducens (strain ATCC BAA-1160 / DSM 100696 / MI-1) (Desulfotomaculum reducens) protein is Ribonuclease 3.